The primary structure comprises 646 residues: Epithelial sodium channel subunit beta-2 (646 aa).

The Cytoplasmic portion of the chain corresponds to Met1–Met57. The helical transmembrane segment at Trp58–Leu78 threads the bilayer. Over Thr79–Gly551 the chain is Extracellular. 8 disulfide bridges follow: Cys104/Cys290, Cys214/Cys221, Cys267/Cys274, Cys380/Cys467, Cys405/Cys463, Cys409/Cys459, Cys418/Cys445, and Cys420/Cys434. The chain crosses the membrane as a helical span at residues Ser552–Leu572. The Cytoplasmic portion of the chain corresponds to Lys573–Asn646. Residues Gln586–Asn646 are disordered. The span at Gln610 to Glu619 shows a compositional bias: basic and acidic residues.

Belongs to the amiloride-sensitive sodium channel (TC 1.A.6) family. SCNN1B subfamily. In terms of assembly, component of the heterotrimeric epithelial sodium channel (ENaC) composed of an alpha/SCNN1A, a beta/SCNN1B and a gamma/SCNN1G subunit.

The protein localises to the apical cell membrane. It is found in the cytoplasmic vesicle membrane. The enzyme catalyses Na(+)(in) = Na(+)(out). With respect to regulation, originally identified and characterized by its inhibition by the diuretic drug amiloride. This is one of the three pore-forming subunits of the heterotrimeric epithelial sodium channel (ENaC), a critical regulator of sodium balance and fluid homeostasis. ENaC operates in epithelial tissues, where it mediates the electrodiffusion of sodium ions from extracellular fluid through the apical membrane of cells, with water following osmotically. The sequence is that of Epithelial sodium channel subunit beta-2 (scnn1b-b) from Xenopus laevis (African clawed frog).